The following is a 113-amino-acid chain: Protein Rev (113 aa).

The homomultimerization stretch occupies residues 15–23 (LIKFLYQSN). The interval 17–45 (KFLYQSNPPPSPEGTRQARRNRRRRWRQR) is disordered. The short motif at 31–47 (TRQARRNRRRRWRQRQR) is the Nuclear localization signal and RNA-binding (RRE) element. The segment covering 33 to 45 (QARRNRRRRWRQR) has biased composition (basic residues). Positions 70 to 81 (LQLPPLERLTLD) match the Nuclear export signal and binding to XPO1 motif. Phosphoserine; by host is present on residues S89 and S96. Residues 89 to 113 (SGTQGVGSPQILVESPTILESGTKE) form a disordered region.

It belongs to the HIV-1 REV protein family. As to quaternary structure, homomultimer; when bound to the RRE. Multimeric assembly is essential for activity and may involve XPO1. Binds to human KPNB1, XPO1, TNPO1, RANBP5 and IPO7. Interacts with the viral Integrase. Interacts with human KHDRBS1. Interacts with human NAP1; this interaction decreases Rev multimerization and stimulates its activity. Interacts with human DEAD-box helicases DDX3 and DDX24; these interactions may serve for viral RNA export to the cytoplasm and packaging, respectively. Interacts with human PSIP1; this interaction may inhibit HIV-1 DNA integration by promoting dissociation of the Integrase-LEDGF/p75 complex. Post-translationally, asymmetrically arginine dimethylated at one site by host PRMT6. Methylation impairs the RNA-binding activity and export of viral RNA from the nucleus to the cytoplasm. In terms of processing, phosphorylated by protein kinase CK2. Presence of, and maybe binding to the N-terminus of the regulatory beta subunit of CK2 is necessary for CK2-mediated Rev's phosphorylation.

It is found in the host nucleus. It localises to the host nucleolus. The protein localises to the host cytoplasm. Its function is as follows. Escorts unspliced or incompletely spliced viral pre-mRNAs (late transcripts) out of the nucleus of infected cells. These pre-mRNAs carry a recognition sequence called Rev responsive element (RRE) located in the env gene, that is not present in fully spliced viral mRNAs (early transcripts). This function is essential since most viral proteins are translated from unspliced or partially spliced pre-mRNAs which cannot exit the nucleus by the pathway used by fully processed cellular mRNAs. Rev itself is translated from a fully spliced mRNA that readily exits the nucleus. Rev's nuclear localization signal (NLS) binds directly to KPNB1/Importin beta-1 without previous binding to KPNA1/Importin alpha-1. KPNB1 binds to the GDP bound form of RAN (Ran-GDP) and targets Rev to the nucleus. In the nucleus, the conversion from Ran-GDP to Ran-GTP dissociates Rev from KPNB1 and allows Rev's binding to the RRE in viral pre-mRNAs. Rev multimerization on the RRE via cooperative assembly exposes its nuclear export signal (NES) to the surface. Rev can then form a complex with XPO1/CRM1 and Ran-GTP, leading to nuclear export of the complex. Conversion from Ran-GTP to Ran-GDP mediates dissociation of the Rev/RRE/XPO1/RAN complex, so that Rev can return to the nucleus for a subsequent round of export. Beside KPNB1, also seems to interact with TNPO1/Transportin-1, RANBP5/IPO5 and IPO7/RANBP7 for nuclear import. The nucleoporin-like HRB/RIP is an essential cofactor that probably indirectly interacts with Rev to release HIV RNAs from the perinuclear region to the cytoplasm. The chain is Protein Rev from Human immunodeficiency virus type 1 group M subtype B (isolate JH32) (HIV-1).